Here is a 289-residue protein sequence, read N- to C-terminus: B- and T-lymphocyte attenuator (289 aa).

Positions 1-30 (MKTLPAMLGTGKLFWVFFLIPYLDIWNIHG) are cleaved as a signal peptide. An Ig-like V-type domain is found at 31–132 (KESCDVQLYI…LIESHSTTLY (102 aa)). The Extracellular portion of the chain corresponds to 31-157 (KESCDVQLYI…MASRPWLLYR (127 aa)). Intrachain disulfides connect Cys-34/Cys-63, Cys-58/Cys-115, and Cys-72/Cys-79. N-linked (GlcNAc...) asparagine glycosylation is found at Asn-75, Asn-94, and Asn-110. A helical transmembrane segment spans residues 158 to 178 (LLPLGGLPLLITTCFCLFCCL). Residues 179 to 289 (RRHQGKQNEL…TEYASICVRS (111 aa)) lie on the Cytoplasmic side of the membrane.

As to quaternary structure, interacts with tyrosine phosphatases PTPN6/SHP-1 and PTPN11/SHP-2. Interacts with TNFRSF14/HVEM (via cysteine-rich domain 1). In terms of processing, phosphorylated on Tyr residues by TNFRSF14 and by antigen receptors cross-linking, both inducing association with PTPN6 and PTPN11. Post-translationally, N-glycosylated.

The protein localises to the cell membrane. Inhibitory receptor on lymphocytes that negatively regulates antigen receptor signaling via PTPN6/SHP-1 and PTPN11/SHP-2. May interact in cis (on the same cell) or in trans (on other cells) with TNFRSF14. In cis interactions, appears to play an immune regulatory role inhibiting in trans interactions in naive T cells to maintain a resting state. In trans interactions, can predominate during adaptive immune response to provide survival signals to effector T cells. The chain is B- and T-lymphocyte attenuator from Homo sapiens (Human).